The primary structure comprises 125 residues: MIKIDFEKMGGLIPAVIQDNESGEVLMVAFMDEKTLNLTLESGKTWFFSRTRNKYWMKGEESGNTQDVVEVLTDCDADTVVIKVKQNGPAACHTGNRSCFYVKYENGSWVEHSNPLFDPNTVYKK.

Mg(2+) is bound at residue aspartate 74. Cysteine 75 contacts Zn(2+). Residues aspartate 76 and aspartate 78 each contribute to the Mg(2+) site. The Zn(2+) site is built by cysteine 92 and cysteine 99.

The protein belongs to the PRA-CH family. In terms of assembly, homodimer. Requires Mg(2+) as cofactor. Zn(2+) serves as cofactor.

It localises to the cytoplasm. The catalysed reaction is 1-(5-phospho-beta-D-ribosyl)-5'-AMP + H2O = 1-(5-phospho-beta-D-ribosyl)-5-[(5-phospho-beta-D-ribosylamino)methylideneamino]imidazole-4-carboxamide. It functions in the pathway amino-acid biosynthesis; L-histidine biosynthesis; L-histidine from 5-phospho-alpha-D-ribose 1-diphosphate: step 3/9. In terms of biological role, catalyzes the hydrolysis of the adenine ring of phosphoribosyl-AMP. The polypeptide is Phosphoribosyl-AMP cyclohydrolase (Geobacter sp. (strain M21)).